Consider the following 126-residue polypeptide: Adenosine 5'-monophosphoramidase HINT1 (126 aa).

A2 bears the N-acetylalanine mark. In terms of domain architecture, HIT spans 18 to 126; the sequence is IFGKIIRKEI…GGRQMNWPPG (109 aa). An N6-acetyllysine mark is found at K21 and K30. AMP is bound at residue 43–44; the sequence is DI. Phosphoserine is present on residues S45 and S72. Residues N99, 105-107, and 112-114 each bind AMP; these read GQS and HLH. The Histidine triad motif signature appears at 110 to 114; it reads HVHLH. Catalysis depends on H112, which acts as the Tele-AMP-histidine intermediate.

This sequence belongs to the HINT family. As to quaternary structure, homodimer. Interacts with CDK7. Interacts with RUVBL1 and RUVBL2 and is associated with the LEF1/TCF1-CTNNB1 complex and with a KAT5 histone acetyltransferase complex. Identified in a complex with MITF and CTNNB1. Interacts with CDC34 and RBX1, and is part of a SCF (SKP2-CUL1-F-box protein) E3 ubiquitin-protein ligase complex. Interacts with SUMO1, SUMO2 and RGS17. Interacts with the Ten-1 ICD form of TENM1. Interacts with CALM1; interaction increases in the presence of calcium ions. In terms of tissue distribution, widely expressed.

Its subcellular location is the cytoplasm. The protein resides in the nucleus. The catalysed reaction is adenosine 5'-phosphoramidate + H2O = AMP + NH4(+). Exhibits adenosine 5'-monophosphoramidase activity, hydrolyzing purine nucleotide phosphoramidates with a single phosphate group such as adenosine 5'monophosphoramidate (AMP-NH2) to yield AMP and NH2. Hydrolyzes adenosine 5'monophosphomorpholidate (AMP-morpholidate) and guanosine 5'monophosphomorpholidate (GMP-morpholidate). Hydrolyzes lysyl-AMP (AMP-N-epsilon-(N-alpha-acetyl lysine methyl ester)) generated by lysine tRNA ligase. Hydrolyzes Met-AMP, His-AMP, Asp-AMP, lysyl-GMP (GMP-N-epsilon-(N-alpha-acetyl lysine methyl ester)) and AMP-N-alanine methyl ester. Can also convert adenosine 5'-O-phosphorothioate and guanosine 5'-O-phosphorothioate to the corresponding nucleoside 5'-O-phosphates with concomitant release of hydrogen sulfide. In addition, functions as a scaffolding protein that modulates transcriptional activation by the LEF1/TCF1-CTNNB1 complex and by the complex formed with MITF and CTNNB1. Modulates p53/TP53 levels and p53/TP53-mediated apoptosis. Modulates proteasomal degradation of target proteins by the SCF (SKP2-CUL1-F-box protein) E3 ubiquitin-protein ligase complex. Also exhibits SUMO-specific isopeptidase activity, deconjugating SUMO1 from RANGAP1 and RGS17. This Oryctolagus cuniculus (Rabbit) protein is Adenosine 5'-monophosphoramidase HINT1 (HINT1).